The following is a 204-amino-acid chain: MAGSRRKSPGITPEILLRAYSIGLFPMAESADDPEIFWVEPELRGVLPLDHFHLSKSLAKTVRRKPFEIRFDHAFDSVIAACAEETSGRPSTWINKTIRSLYATLFDMGHAHTVEAWDGDKLVGGLYGVSLGSAFFGESMFSRRTDASKICLVHLVERLRERGFTLLDTQFTTEHLKTFGAIDVAKADYAVMLAAAMQSPHLKF.

Belongs to the L/F-transferase family.

It is found in the cytoplasm. It catalyses the reaction N-terminal L-lysyl-[protein] + L-leucyl-tRNA(Leu) = N-terminal L-leucyl-L-lysyl-[protein] + tRNA(Leu) + H(+). It carries out the reaction N-terminal L-arginyl-[protein] + L-leucyl-tRNA(Leu) = N-terminal L-leucyl-L-arginyl-[protein] + tRNA(Leu) + H(+). The enzyme catalyses L-phenylalanyl-tRNA(Phe) + an N-terminal L-alpha-aminoacyl-[protein] = an N-terminal L-phenylalanyl-L-alpha-aminoacyl-[protein] + tRNA(Phe). Functions in the N-end rule pathway of protein degradation where it conjugates Leu, Phe and, less efficiently, Met from aminoacyl-tRNAs to the N-termini of proteins containing an N-terminal arginine or lysine. The protein is Leucyl/phenylalanyl-tRNA--protein transferase of Rhizobium leguminosarum bv. trifolii (strain WSM2304).